We begin with the raw amino-acid sequence, 308 residues long: Transcription initiation factor IIB (308 aa).

2 consecutive repeat copies span residues 124 to 207 and 218 to 299.

The protein belongs to the TFIIB family.

Functionally, stabilizes TBP binding to an archaeal box-A promoter. Also responsible for recruiting RNA polymerase II to the pre-initiation complex (DNA-TBP-TFIIB). This chain is Transcription initiation factor IIB, found in Sulfurisphaera tokodaii (strain DSM 16993 / JCM 10545 / NBRC 100140 / 7) (Sulfolobus tokodaii).